The primary structure comprises 155 residues: 6,7-dimethyl-8-ribityllumazine synthase (155 aa).

Residues Phe23, 57 to 59, and 81 to 83 contribute to the 5-amino-6-(D-ribitylamino)uracil site; these read AFE and AVI. Residue 86 to 87 participates in (2S)-2-hydroxy-3-oxobutyl phosphate binding; sequence ST. The Proton donor role is filled by His89. Position 114 (Phe114) interacts with 5-amino-6-(D-ribitylamino)uracil. Residue Arg128 coordinates (2S)-2-hydroxy-3-oxobutyl phosphate.

The protein belongs to the DMRL synthase family.

It catalyses the reaction (2S)-2-hydroxy-3-oxobutyl phosphate + 5-amino-6-(D-ribitylamino)uracil = 6,7-dimethyl-8-(1-D-ribityl)lumazine + phosphate + 2 H2O + H(+). Its pathway is cofactor biosynthesis; riboflavin biosynthesis; riboflavin from 2-hydroxy-3-oxobutyl phosphate and 5-amino-6-(D-ribitylamino)uracil: step 1/2. Catalyzes the formation of 6,7-dimethyl-8-ribityllumazine by condensation of 5-amino-6-(D-ribitylamino)uracil with 3,4-dihydroxy-2-butanone 4-phosphate. This is the penultimate step in the biosynthesis of riboflavin. The chain is 6,7-dimethyl-8-ribityllumazine synthase from Trichlorobacter lovleyi (strain ATCC BAA-1151 / DSM 17278 / SZ) (Geobacter lovleyi).